The following is a 500-amino-acid chain: MPKNPSQYILALDLGTTGNRAILFNHQGEIAGQSYQELTQYYPHPGWLEHDAIEIWQDTCNIIKKVLKTTNIDITAIAAIGLTVQRETCLLWDKTTGKPLHNAIVWQDRRTSSLCHQLKTEGKSVEITQKTGLIIDPYFSATKLTWLLEWVKANNPSVALKNVLAGTIDAWILWNLTGGQVHATDHSNASRTMLMNLDTRSWDRDLMDLFGIPERIMPEIRPSLSYFGETDPQLFGAKIPITAIFGDQQAALFAHGCNRPGLLKCTYGTGSFLIIQAGTQVMRSHHQLLSTVAWSTENSAYYALEGAIFTSGAAIQWLRDGLKIINNAAETETLSRQVTDTKGVYFVPALSGLGAPHWDMNARGAFFGITGGVGREHLVRAVLEAIAYQVKEVVDAINLESTLKVAALKVDGGASQNDFLMQFQADALGVPIERPLILDATAQGAAFGAGLTVGFWDDYDSLIASRIIDKIFEPGEDREQVQANFIPWQRAVERAKNWVH.

Residue threonine 16 coordinates ADP. ATP is bound by residues threonine 16 and threonine 17. Threonine 16 is a sn-glycerol 3-phosphate binding site. Arginine 20 contributes to the ADP binding site. Sn-glycerol 3-phosphate-binding residues include arginine 86, glutamate 87, tyrosine 138, and aspartate 247. Positions 86, 87, 138, 247, and 248 each coordinate glycerol. Positions 269 and 312 each coordinate ADP. The ATP site is built by threonine 269, glycine 312, glutamine 316, and glycine 413. Glycine 413 and asparagine 417 together coordinate ADP.

Belongs to the FGGY kinase family.

It catalyses the reaction glycerol + ATP = sn-glycerol 3-phosphate + ADP + H(+). Its pathway is polyol metabolism; glycerol degradation via glycerol kinase pathway; sn-glycerol 3-phosphate from glycerol: step 1/1. Its activity is regulated as follows. Inhibited by fructose 1,6-bisphosphate (FBP). Its function is as follows. Key enzyme in the regulation of glycerol uptake and metabolism. Catalyzes the phosphorylation of glycerol to yield sn-glycerol 3-phosphate. This chain is Glycerol kinase, found in Rippkaea orientalis (strain PCC 8801 / RF-1) (Cyanothece sp. (strain PCC 8801)).